Consider the following 1334-residue polypeptide: SCAR-like protein 2 (1334 aa).

Over residues 197–207 (KTGNFQREKKS) the composition is skewed to basic and acidic residues. 10 disordered regions span residues 197–281 (KTGN…SSFS), 294–331 (DTKP…GTSA), 481–516 (PDSS…ADAP), 568–602 (PNQS…SSYT), 643–668 (DKPT…TVES), 791–832 (STSH…KNII), 931–956 (FEKK…YSEK), 1000–1026 (FQLL…GRSY), 1248–1268 (SGQQ…DTKN), and 1280–1304 (RSKT…TANS). The segment covering 241–256 (VQLTSRHFATPSTDGR) has biased composition (polar residues). Over residues 310–319 (SNNNLHKLSN) the composition is skewed to low complexity. Residues 320-330 (TPLHTRLNGTS) show a composition bias toward polar residues. Positions 574–595 (DSKEIPDSKAEDAPIDSPEKLE) are enriched in basic and acidic residues. The segment covering 791 to 823 (STSHSSETNQSTVRTPDTVIGQTEGSTGCSTSF) has biased composition (polar residues). Low complexity predominate over residues 945-956 (SSLFSSSHYSEK). The segment covering 1248 to 1260 (SGQQKLNGHEKSK) has biased composition (basic and acidic residues). The region spanning 1271–1289 (EREELLQQIRSKTFNLRRT) is the WH2 domain. Low complexity predominate over residues 1289–1304 (TNASKTNTSSPTTANS).

This sequence belongs to the SCAR/WAVE family.

The protein localises to the cytoplasm. It localises to the cytoskeleton. Functionally, involved in regulation of actin and microtubule organization. Part of a WAVE complex that activates the Arp2/3 complex. This is SCAR-like protein 2 from Oryza sativa subsp. japonica (Rice).